The chain runs to 367 residues: Phosphoribosylformylglycinamidine cyclo-ligase (367 aa).

Belongs to the AIR synthase family.

It is found in the cytoplasm. It catalyses the reaction 2-formamido-N(1)-(5-O-phospho-beta-D-ribosyl)acetamidine + ATP = 5-amino-1-(5-phospho-beta-D-ribosyl)imidazole + ADP + phosphate + H(+). The protein operates within purine metabolism; IMP biosynthesis via de novo pathway; 5-amino-1-(5-phospho-D-ribosyl)imidazole from N(2)-formyl-N(1)-(5-phospho-D-ribosyl)glycinamide: step 2/2. The chain is Phosphoribosylformylglycinamidine cyclo-ligase from Cyanothece sp. (strain PCC 7425 / ATCC 29141).